Reading from the N-terminus, the 90-residue chain is MSITSEKKKSLINIYAIKEDDTGSSFVQCAILTERISNLTEHFKVHKHDHHSKRGLLILIGRRRKHLNYIKRKFGNEAYQELIEKLGIRK.

This sequence belongs to the universal ribosomal protein uS15 family. In terms of assembly, part of the 30S ribosomal subunit. Forms a bridge to the 50S subunit in the 70S ribosome, contacting the 23S rRNA.

One of the primary rRNA binding proteins, it binds directly to 16S rRNA where it helps nucleate assembly of the platform of the 30S subunit by binding and bridging several RNA helices of the 16S rRNA. Functionally, forms an intersubunit bridge (bridge B4) with the 23S rRNA of the 50S subunit in the ribosome. This Wolbachia sp. subsp. Drosophila simulans (strain wRi) protein is Small ribosomal subunit protein uS15.